Reading from the N-terminus, the 732-residue chain is Prolyl tripeptidyl peptidase (732 aa).

The first 24 residues, 1–24, serve as a signal peptide directing secretion; that stretch reads MKKTIFQQLFLSVCALTVALPCSA. Active-site charge relay system residues include serine 603, aspartate 678, and histidine 710.

It belongs to the peptidase S9B family.

It carries out the reaction Hydrolysis of Xaa-Xaa-Pro-|-Yaa- releasing the N-terminal tripeptide of a peptide with Pro as the third residue (position P1) and where Yaa is not proline.. Serine proteinase. Releases tripeptides from the free amino terminus of proteins. Has a requirement for Pro in the P1 position, but is inactivated by Pro in the P1' position. The protein is Prolyl tripeptidyl peptidase of Porphyromonas gingivalis (strain ATCC 33277 / DSM 20709 / CIP 103683 / JCM 12257 / NCTC 11834 / 2561).